Consider the following 510-residue polypeptide: ETS translocation variant 5 (510 aa).

Residues lysine 132 to arginine 245 form a disordered region. Positions threonine 163–proline 174 are enriched in low complexity. Polar residues predominate over residues glutamine 211–glutamate 224. At serine 248 the chain carries Phosphoserine. Lysine 350 participates in a covalent cross-link: Glycyl lysine isopeptide (Lys-Gly) (interchain with G-Cter in SUMO2). Positions leucine 368 to valine 448 form a DNA-binding region, ETS.

This sequence belongs to the ETS family. In terms of assembly, interacts (via C-terminal) with ZMYM5 (via N-terminal 120 amino acid region). As to expression, in the brain, expressed predominantly in the cerebral cortex, the amygdala and the hypothalamus. Within the cerebral cortex, there is conspicuously high expression in cortical layers 2, 4 and 6 while expression is almost absent from layers 1, 3 and 5. High expression is also observed in the dorsal and ventral endopiriform claustrum. Strong expression is observed in limited parts of the amygdala including the basolateral amygdaloid nucleus, the bed stria terminalis and the central amygdaloid nucleus. Low to moderate levels are found in the hypothalamus while expression is almost absent in the thalamus. Hypothalamic expression is seen in the dorsomedial hypothalamic nucleus and also the central, dorsomedial and ventrolateral parts of the ventromedial hypothalamic nucleus. Strong expression is also identified in the nigrostriatal tract. In the mesencephalon, expression is restricted to the ventral tegmental area including the parabrachial pigmented nucleus. In the hippocampus, strongly expressed in the pyramidal cell layer. Some expression is also found in the lacunosum moleculare layer. Low levels of expression in the cerebellum, including the granular, molecular and Purkinje cell layers.

It localises to the nucleus. Binds to DNA sequences containing the consensus nucleotide core sequence 5'-GGAA.-3'. The chain is ETS translocation variant 5 (Etv5) from Mus musculus (Mouse).